Reading from the N-terminus, the 173-residue chain is Large ribosomal subunit protein uL16 (173 aa).

The protein belongs to the universal ribosomal protein uL16 family.

This is Large ribosomal subunit protein uL16 from Methanococcus maripaludis (strain C5 / ATCC BAA-1333).